A 98-amino-acid chain; its full sequence is DNA-binding protein Fis (98 aa).

The segment at residues 74-93 (QTRAAVMMGINRGTLRKKLK) is a DNA-binding region (H-T-H motif).

Belongs to the transcriptional regulatory Fis family. In terms of assembly, homodimer.

In terms of biological role, activates ribosomal RNA transcription. Plays a direct role in upstream activation of rRNA promoters. The protein is DNA-binding protein Fis of Aeromonas hydrophila subsp. hydrophila (strain ATCC 7966 / DSM 30187 / BCRC 13018 / CCUG 14551 / JCM 1027 / KCTC 2358 / NCIMB 9240 / NCTC 8049).